Here is a 118-residue protein sequence, read N- to C-terminus: Large ribosomal subunit protein uL22c (118 aa).

The protein belongs to the universal ribosomal protein uL22 family. In terms of assembly, part of the 50S ribosomal subunit.

It localises to the plastid. Its subcellular location is the organellar chromatophore. In terms of biological role, this protein binds specifically to 23S rRNA. Functionally, the globular domain of the protein is located near the polypeptide exit tunnel on the outside of the subunit, while an extended beta-hairpin is found that lines the wall of the exit tunnel in the center of the 70S ribosome. This chain is Large ribosomal subunit protein uL22c (rpl22), found in Paulinella chromatophora.